A 231-amino-acid polypeptide reads, in one-letter code: Ureidoacrylate amidohydrolase RutB (231 aa).

Catalysis depends on D25, which acts as the Proton acceptor. The active site involves K134. C167 (nucleophile) is an active-site residue.

It belongs to the isochorismatase family. RutB subfamily.

It catalyses the reaction (Z)-3-ureidoacrylate + H2O + H(+) = (Z)-3-aminoacrylate + NH4(+) + CO2. The enzyme catalyses (Z)-3-ureidoacrylate + H2O = (Z)-3-aminoacrylate + carbamate + H(+). It carries out the reaction (Z)-2-methylureidoacrylate + H2O + H(+) = (Z)-2-methylaminoacrylate + NH4(+) + CO2. In terms of biological role, hydrolyzes ureidoacrylate to form aminoacrylate and carbamate. The carbamate hydrolyzes spontaneously, thereby releasing one of the nitrogen atoms of the pyrimidine ring as ammonia and one of its carbon atoms as CO2. The protein is Ureidoacrylate amidohydrolase RutB of Escherichia coli O18:K1:H7 (strain IHE3034 / ExPEC).